The primary structure comprises 204 residues: Recombination protein RecR (204 aa).

A C4-type zinc finger spans residues 63–78 (CRICFNVADSELCPIC). One can recognise a Toprim domain in the interval 86–181 (NKICVVEQPQ…KVTRLARGLP (96 aa)).

This sequence belongs to the RecR family.

May play a role in DNA repair. It seems to be involved in an RecBC-independent recombinational process of DNA repair. It may act with RecF and RecO. The polypeptide is Recombination protein RecR (Dehalococcoides mccartyi (strain ATCC BAA-2266 / KCTC 15142 / 195) (Dehalococcoides ethenogenes (strain 195))).